We begin with the raw amino-acid sequence, 733 residues long: Catalase-peroxidase (733 aa).

A disordered region spans residues 1-24 (MTDDSTCPVTGGADKQVTGRGQSY). A cross-link (tryptophyl-tyrosyl-methioninium (Trp-Tyr) (with M-245)) is located at residues 96–219 (WHSAGTYRTL…LAAVQMGLIY (124 aa)). Catalysis depends on histidine 97, which acts as the Proton acceptor. Positions 219-245 (YVNPEGPNGKPDPVAAAKDIRETFARM) form a cross-link, tryptophyl-tyrosyl-methioninium (Tyr-Met) (with W-96). Histidine 260 contributes to the heme b binding site.

Belongs to the peroxidase family. Peroxidase/catalase subfamily. In terms of assembly, homodimer or homotetramer. Heme b serves as cofactor. Post-translationally, formation of the three residue Trp-Tyr-Met cross-link is important for the catalase, but not the peroxidase activity of the enzyme.

The catalysed reaction is H2O2 + AH2 = A + 2 H2O. It carries out the reaction 2 H2O2 = O2 + 2 H2O. Its function is as follows. Bifunctional enzyme with both catalase and broad-spectrum peroxidase activity. The sequence is that of Catalase-peroxidase from Methanoregula boonei (strain DSM 21154 / JCM 14090 / 6A8).